Reading from the N-terminus, the 541-residue chain is GMP synthase [glutamine-hydrolyzing] (541 aa).

Residues 15 to 209 (TILTLDFGSQ…AVNICGCKQN (195 aa)) form the Glutamine amidotransferase type-1 domain. Cys91 functions as the Nucleophile in the catalytic mechanism. Active-site residues include His183 and Glu185. Positions 210-416 (WTMARFVDQE…LGIAHEMVMR (207 aa)) constitute a GMPS ATP-PPase domain. 238–244 (SGGVDST) is an ATP binding site. 4 residues coordinate XMP: Arg311, Asp478, Lys533, and Glu539.

Homodimer. The cofactor is Mg(2+).

Its subcellular location is the cytoplasm. The protein resides in the cytosol. The catalysed reaction is XMP + L-glutamine + ATP + H2O = GMP + L-glutamate + AMP + diphosphate + 2 H(+). Its pathway is purine metabolism; GMP biosynthesis; GMP from XMP (L-Gln route): step 1/1. In terms of biological role, catalyzes the conversion of xanthine monophosphate (XMP) to GMP in the presence of glutamine and ATP through an adenyl-XMP intermediate. This is GMP synthase [glutamine-hydrolyzing] (gua1) from Aspergillus oryzae (strain ATCC 42149 / RIB 40) (Yellow koji mold).